A 641-amino-acid polypeptide reads, in one-letter code: Mediator of RNA polymerase II transcription subunit 17 (641 aa).

Residues 159–186 adopt a coiled-coil conformation; sequence RLQSFNAAADKLLKSAARLETEVASETR.

It belongs to the Mediator complex subunit 17 family. In terms of assembly, component of the Mediator complex.

It localises to the nucleus. Its function is as follows. Component of the Mediator complex, a coactivator involved in the regulated transcription of nearly all RNA polymerase II-dependent genes. Mediator functions as a bridge to convey information from gene-specific regulatory proteins to the basal RNA polymerase II transcription machinery. Mediator is recruited to promoters by direct interactions with regulatory proteins and serves as a scaffold for the assembly of a functional preinitiation complex with RNA polymerase II and the general transcription factors. This chain is Mediator of RNA polymerase II transcription subunit 17 (srb4), found in Aspergillus clavatus (strain ATCC 1007 / CBS 513.65 / DSM 816 / NCTC 3887 / NRRL 1 / QM 1276 / 107).